The sequence spans 478 residues: Methionine aminopeptidase 2 (478 aa).

The disordered stretch occupies residues 1-122 (MAGVEEVAAS…TDPPSVPICD (122 aa)). Ala2 is modified (N-acetylalanine). A compositionally biased stretch (basic residues) spans 36 to 46 (KKKRRKKKKSK). The residue at position 45 (Ser45) is a Phosphoserine. Residues 55–79 (EPDKESGASVDEVARQLERSALEDK) are compositionally biased toward basic and acidic residues. Phosphoserine; alternate occurs at positions 60 and 63. 2 O-linked (GlcNAc) serine; alternate glycosylation sites follow: Ser60 and Ser63. Position 74 is a phosphoserine (Ser74). Residues 80-92 (ERDEDDEDGDGDG) show a composition bias toward acidic residues. Over residues 97 to 109 (GKKKKKKKKKRGP) the composition is skewed to basic residues. Substrate is bound at residue His231. 3 residues coordinate a divalent metal cation: Asp251, Asp262, and His331. Residue His339 coordinates substrate. Glu364 and Glu459 together coordinate a divalent metal cation.

The protein belongs to the peptidase M24A family. Methionine aminopeptidase eukaryotic type 2 subfamily. As to quaternary structure, interacts strongly with the eIF-2 gamma-subunit EIF2S3. Binds EIF2S1 at low magnesium concentrations. Requires Co(2+) as cofactor. It depends on Zn(2+) as a cofactor. Mn(2+) serves as cofactor. The cofactor is Fe(2+). Contains approximately 12 O-linked N-acetylglucosamine (GlcNAc) residues. O-glycosylation is required for EIF2S1 binding.

It is found in the cytoplasm. It catalyses the reaction Release of N-terminal amino acids, preferentially methionine, from peptides and arylamides.. Cotranslationally removes the N-terminal methionine from nascent proteins. The N-terminal methionine is often cleaved when the second residue in the primary sequence is small and uncharged (Met-Ala-, Cys, Gly, Pro, Ser, Thr, or Val). The catalytic activity of human METAP2 toward Met-Val peptides is consistently two orders of magnitude higher than that of METAP1, suggesting that it is responsible for processing proteins containing N-terminal Met-Val and Met-Thr sequences in vivo. Functionally, protects eukaryotic initiation factor EIF2S1 from translation-inhibiting phosphorylation by inhibitory kinases such as EIF2AK2/PKR and EIF2AK1/HCR. Plays a critical role in the regulation of protein synthesis. This chain is Methionine aminopeptidase 2, found in Homo sapiens (Human).